The chain runs to 448 residues: Trigger factor (448 aa).

Residues 163 to 248 enclose the PPIase FKBP-type domain; sequence GDIVVIDFDG…VKDIRVPKAA (86 aa).

The protein belongs to the FKBP-type PPIase family. Tig subfamily.

It localises to the cytoplasm. It carries out the reaction [protein]-peptidylproline (omega=180) = [protein]-peptidylproline (omega=0). Involved in protein export. Acts as a chaperone by maintaining the newly synthesized protein in an open conformation. Functions as a peptidyl-prolyl cis-trans isomerase. This chain is Trigger factor, found in Rhodospirillum centenum (strain ATCC 51521 / SW).